The chain runs to 370 residues: Sphingosine 1-phosphate receptor 2 (370 aa).

Over 1–57 the chain is Extracellular; it reads MTTCRLFAGFCQAVTMSKYSQYFNKTLIQVHYLTAKEMTAEELRDRIESKQSLSSLN. A glycan (N-linked (GlcNAc...) asparagine) is linked at N24. Residues 58–78 form a helical membrane-spanning segment; that stretch reads ILFVVICSIIILENLLVLIAV. Residues 79–87 are Cytoplasmic-facing; the sequence is FRNKKFHSA. The chain crosses the membrane as a helical span at residues 88-108; the sequence is MFFFIGNLAFSDLLAGSAYIA. Residues 109-128 lie on the Extracellular side of the membrane; it reads NIFLSGPRTFHLTPVQWFIR. Residues 129–149 traverse the membrane as a helical segment; sequence EGTAFIALSASVFSLLAIAIE. Residues 150-167 are Cytoplasmic-facing; that stretch reads RYIAITKVKVYGSNKTCR. Residues 168 to 193 form a helical membrane-spanning segment; it reads MFLLIGACWVMSILLGGLPIIGWNCI. At 194–219 the chain is on the extracellular side; sequence NNLDDCSAVLPLNTRYYIRFVVTIFS. A helical transmembrane segment spans residues 220-230; the sequence is IILLSIVILYV. At 231–254 the chain is on the cytoplasmic side; it reads RIYLIVRTSHQEATNSPAYALLKT. The helical transmembrane segment at 255–275 threads the bilayer; that stretch reads VTIVLGVFIICWLPAFTILLL. The Extracellular segment spans residues 276–289; sequence DTSCKMKQCPILNN. Residues 290–310 form a helical membrane-spanning segment; that stretch reads AGIFFSFATLNSALNPLIYTL. Residues 311-370 lie on the Cytoplasmic side of the membrane; that stretch reads RSKDMRKEFLRVLCCWGLLNCGRPPHRCMVPLKSSSSMEHCTNKHEHQSIPIMQDCTTCV. C325 carries the S-palmitoyl cysteine lipid modification.

This sequence belongs to the G-protein coupled receptor 1 family.

The protein localises to the cell membrane. In terms of biological role, receptor for the lysosphingolipid sphingosine 1-phosphate (S1P). S1P receptor is critical for cell migration and epithelial integrity during vertebrate embryogenesis. Receptor for the chemokine-like protein FAM19A5. Mediates the inhibitory effect of FAM19A5 on vascular smooth muscle cell proliferation and migration. In Danio rerio (Zebrafish), this protein is Sphingosine 1-phosphate receptor 2 (s1pr2).